The chain runs to 70 residues: Disintegrin triflavin (70 aa).

The region spanning 1-70 (GEECDCGSPS…SADCPRWNGL (70 aa)) is the Disintegrin domain. Intrachain disulfides connect Cys-4–Cys-19, Cys-6–Cys-14, Cys-13–Cys-36, Cys-27–Cys-33, Cys-32–Cys-57, and Cys-45–Cys-64. Positions 49–51 (RGD) match the Cell attachment site motif.

The protein belongs to the venom metalloproteinase (M12B) family. P-II subfamily. P-IIa sub-subfamily. In terms of assembly, monomer. In terms of tissue distribution, expressed by the venom gland.

Its subcellular location is the secreted. Its function is as follows. Inhibits fibrinogen interaction with platelets. Acts by binding to alpha-IIb/beta-3 (ITGA2B/ITGB3) on the platelet surface and inhibits aggregation induced by ADP, thrombin, platelet-activating factor and collagen. In Protobothrops flavoviridis (Habu), this protein is Disintegrin triflavin.